The chain runs to 620 residues: Arginine--tRNA ligase (620 aa).

Positions 147 to 157 (ANPTGPIHIGG) match the 'HIGH' region motif.

Belongs to the class-I aminoacyl-tRNA synthetase family. In terms of assembly, monomer.

The protein resides in the cytoplasm. The catalysed reaction is tRNA(Arg) + L-arginine + ATP = L-arginyl-tRNA(Arg) + AMP + diphosphate. The polypeptide is Arginine--tRNA ligase (Bifidobacterium longum subsp. infantis (strain ATCC 15697 / DSM 20088 / JCM 1222 / NCTC 11817 / S12)).